Reading from the N-terminus, the 698-residue chain is Cytoplasmic polyadenylation element-binding protein 3 (698 aa).

Residues 1–11 show a composition bias toward basic and acidic residues; sequence MQDDLLMDKSK. Disordered regions lie at residues 1 to 114 and 158 to 208; these read MQDD…WSTG and AQTQ…SAAA. The segment covering 13-28 has biased composition (low complexity); it reads QPQPQQQQRQQQQPQP. Polar residues predominate over residues 29–44; sequence ESSVSEAPSTPLSSET. Pro residues predominate over residues 87–96; the sequence is PQQPPPPQEP. Residues 103 to 114 show a composition bias toward polar residues; it reads LSPSFGSTWSTG. A compositionally biased stretch (pro residues) spans 165-185; sequence QPPPPAPAPQPAQPAQPPQAQ. The span at 186–208 shows a compositional bias: low complexity; that stretch reads PPQQRRSPASPSQAPYAQRSAAA. A phosphoserine mark is found at Ser192, Ser195, and Ser290. Residue Arg308 is modified to Asymmetric dimethylarginine. RRM domains are found at residues 441–532 and 549–631; these read RKVF…PWNL and KTIF…PYVL.

This sequence belongs to the RRM CPEB family. In terms of assembly, following synaptic activity, forms amyloid-like oligomers. Aggregation requires an intact actin cytoskeleton. Interacts with STAT5B; this inhibits STAT5B-mediated transcriptional activation. Interacts with E3 ubiquitin-protein ligase NEURL1; this leads to monoubiquitination and activation of CPEB3. Interacts with CAPN2; this leads to cleavage of CPEB3. Interacts (via C-terminal RNA-binding region) with TOB1; TOB1 also binds CNOT7/CAF1 and recruits it to CPEB3 to form a ternary complex. Interacts with SUMO-conjugating enzyme UBC9. Interacts with IPO5; the interaction is enhanced in a RAN-regulated manner following neuronal stimulation and mediates CPEB3 nuclear import. Interacts with exportin XPO1/CRM1. Activated by NEURL1-mediated monoubiquitination, resulting in the growth of new dendritic spines and increased levels of GRIA1 and GRIA2. NEURL1-mediated monoubiquitination facilitates synaptic plasticity and hippocampal-dependent memory storage. Post-translationally, under basal unstimulated conditions when CPEB3 is mainly unaggregated, sumoylated and acts as a translational repressor. Following neuronal stimulation, becomes desumoylated and aggregated which is required for the translation of mRNA targets and for dendritic filopodia formation. In terms of processing, following neuronal stimulation, cleaved by CAPN2 which abolishes its translational repressor activity, leading to translation of CPEB3 target mRNAs. Phosphorylation is enhanced by neuronal stimulation.

The protein localises to the cytoplasm. The protein resides in the nucleus. It is found in the synapse. Its subcellular location is the cell projection. It localises to the dendrite. The protein localises to the postsynaptic density. Functionally, sequence-specific RNA-binding protein which acts as a translational repressor in the basal unstimulated state but, following neuronal stimulation, acts as a translational activator. In contrast to CPEB1, does not bind to the cytoplasmic polyadenylation element (CPE), a uridine-rich sequence element within the mRNA 3'-UTR, but binds to a U-rich loop within a stem-loop structure. Required for the consolidation and maintenance of hippocampal-based long term memory. In the basal state, binds to the mRNA 3'-UTR of the glutamate receptors GRIA2/GLUR2 mRNA and negatively regulates their translation. Also represses the translation of DLG4, GRIN1, GRIN2A and GRIN2B. When activated, acts as a translational activator of GRIA1 and GRIA2. In the basal state, suppresses SUMO2 translation but activates it following neuronal stimulation. Binds to the 3'-UTR of TRPV1 mRNA and represses TRPV1 translation which is required to maintain normal thermoception. Binds actin mRNA, leading to actin translational repression in the basal state and to translational activation following neuronal stimulation. Negatively regulates target mRNA levels by binding to TOB1 which recruits CNOT7/CAF1 to a ternary complex and this leads to target mRNA deadenylation and decay. In addition to its role in translation, binds to and inhibits the transcriptional activation activity of STAT5B without affecting its dimerization or DNA-binding activity. This, in turn, represses transcription of the STAT5B target gene EGFR which has been shown to play a role in enhancing learning and memory performance. In contrast to CPEB1, CPEB2 and CPEB4, not required for cell cycle progression. The sequence is that of Cytoplasmic polyadenylation element-binding protein 3 (CPEB3) from Homo sapiens (Human).